Consider the following 78-residue polypeptide: Translational regulator CsrA (78 aa).

This sequence belongs to the CsrA/RsmA family. As to quaternary structure, homodimer; the beta-strands of each monomer intercalate to form a hydrophobic core, while the alpha-helices form wings that extend away from the core.

It is found in the cytoplasm. A translational regulator that binds mRNA to regulate translation initiation and/or mRNA stability. Usually binds in the 5'-UTR at or near the Shine-Dalgarno sequence preventing ribosome-binding, thus repressing translation. Its main target seems to be the major flagellin gene, while its function is anatagonized by FliW. The polypeptide is Translational regulator CsrA (Nitratidesulfovibrio vulgaris (strain ATCC 29579 / DSM 644 / CCUG 34227 / NCIMB 8303 / VKM B-1760 / Hildenborough) (Desulfovibrio vulgaris)).